Reading from the N-terminus, the 105-residue chain is Probable non-functional immunoglobulin lambda variable 5-48 (105 aa).

An N-terminal signal peptide occupies residues 1–19 (MAWTPLLLLFLSHCTGSLS). The interval 20-44 (QAVLTQPTSLSASPGASARLTCTLR) is framework-1. The Ig-like domain maps to 20-105 (QAVLTQPTSL…NAGILFISGL (86 aa)). The segment at 45-53 (SGISVGSYR) is complementarity-determining-1. The segment at 54-70 (IYWYQQKPGSPPRYLLN) is framework-2. Residues 71–77 (YYSDSDK) form a complementarity-determining-2 region. The tract at residues 78–105 (HQGSGVPSRFSGSKDASTNAGILFISGL) is framework-3.

In terms of assembly, immunoglobulins are composed of two identical heavy chains and two identical light chains; disulfide-linked.

It localises to the secreted. The protein resides in the cell membrane. Its function is as follows. Probable non-functional open reading frame (ORF) of V region of the variable domain of immunoglobulin light chains. Non-functional ORF generally cannot participate in the synthesis of a productive immunoglobulin chain due to altered V-(D)-J or switch recombination and/or splicing site (at mRNA level) and/or conserved amino acid change (protein level). Immunoglobulins, also known as antibodies, are membrane-bound or secreted glycoproteins produced by B lymphocytes. In the recognition phase of humoral immunity, the membrane-bound immunoglobulins serve as receptors which, upon binding of a specific antigen, trigger the clonal expansion and differentiation of B lymphocytes into immunoglobulins-secreting plasma cells. Secreted immunoglobulins mediate the effector phase of humoral immunity, which results in the elimination of bound antigens. The antigen binding site is formed by the variable domain of one heavy chain, together with that of its associated light chain. Thus, each immunoglobulin has two antigen binding sites with remarkable affinity for a particular antigen. The variable domains are assembled by a process called V-(D)-J rearrangement and can then be subjected to somatic hypermutations which, after exposure to antigen and selection, allow affinity maturation for a particular antigen. The chain is Probable non-functional immunoglobulin lambda variable 5-48 from Homo sapiens (Human).